The following is a 245-amino-acid chain: 1-(5-phosphoribosyl)-5-[(5-phosphoribosylamino)methylideneamino] imidazole-4-carboxamide isomerase (245 aa).

Catalysis depends on aspartate 8, which acts as the Proton acceptor. The active-site Proton donor is the aspartate 131.

This sequence belongs to the HisA/HisF family.

The protein localises to the cytoplasm. The enzyme catalyses 1-(5-phospho-beta-D-ribosyl)-5-[(5-phospho-beta-D-ribosylamino)methylideneamino]imidazole-4-carboxamide = 5-[(5-phospho-1-deoxy-D-ribulos-1-ylimino)methylamino]-1-(5-phospho-beta-D-ribosyl)imidazole-4-carboxamide. Its pathway is amino-acid biosynthesis; L-histidine biosynthesis; L-histidine from 5-phospho-alpha-D-ribose 1-diphosphate: step 4/9. In Neisseria meningitidis serogroup C / serotype 2a (strain ATCC 700532 / DSM 15464 / FAM18), this protein is 1-(5-phosphoribosyl)-5-[(5-phosphoribosylamino)methylideneamino] imidazole-4-carboxamide isomerase.